The sequence spans 541 residues: NEDD8-activating enzyme E1 regulatory subunit (541 aa).

This sequence belongs to the ubiquitin-activating E1 family. ULA1 subfamily. As to quaternary structure, heterodimer of uba-3 and ula-1. The complex binds NEDD8 and ubc-12.

It functions in the pathway protein modification; protein neddylation. Functionally, regulatory subunit of the dimeric uba-3-ula-1 E1 enzyme. E1 activates NEDD8 by first adenylating its C-terminal glycine residue with ATP, thereafter linking this residue to the side chain of the catalytic cysteine, yielding a NEDD8-rfl-1 (uba-3) thioester and free AMP. E1 finally transfers NEDD8 to the catalytic cysteine of ubc-12. Required for rfl-1 (uba-3) nuclear localization during early embryonic development. The polypeptide is NEDD8-activating enzyme E1 regulatory subunit (ula-1) (Caenorhabditis elegans).